The following is a 62-amino-acid chain: Protein translocase subunit SecE (62 aa).

Residues 40–60 (LLVLAVVGVLAYIIQLALTLI) traverse the membrane as a helical segment.

It belongs to the SecE/SEC61-gamma family. Component of the Sec protein translocase complex. Heterotrimer consisting of SecY (alpha), SecG (beta) and SecE (gamma) subunits. The heterotrimers can form oligomers, although 1 heterotrimer is thought to be able to translocate proteins. Interacts with the ribosome. May interact with SecDF, and other proteins may be involved.

The protein resides in the cell membrane. Essential subunit of the Sec protein translocation channel SecYEG. Clamps together the 2 halves of SecY. May contact the channel plug during translocation. The sequence is that of Protein translocase subunit SecE from Saccharolobus solfataricus (strain ATCC 35092 / DSM 1617 / JCM 11322 / P2) (Sulfolobus solfataricus).